The primary structure comprises 464 residues: ATP synthase subunit beta (464 aa).

153-160 lines the ATP pocket; it reads GGAGVGKT.

Belongs to the ATPase alpha/beta chains family. F-type ATPases have 2 components, CF(1) - the catalytic core - and CF(0) - the membrane proton channel. CF(1) has five subunits: alpha(3), beta(3), gamma(1), delta(1), epsilon(1). CF(0) has three main subunits: a(1), b(2) and c(9-12). The alpha and beta chains form an alternating ring which encloses part of the gamma chain. CF(1) is attached to CF(0) by a central stalk formed by the gamma and epsilon chains, while a peripheral stalk is formed by the delta and b chains.

The protein resides in the cell membrane. It carries out the reaction ATP + H2O + 4 H(+)(in) = ADP + phosphate + 5 H(+)(out). In terms of biological role, produces ATP from ADP in the presence of a proton gradient across the membrane. The catalytic sites are hosted primarily by the beta subunits. The chain is ATP synthase subunit beta from Acetivibrio thermocellus (strain ATCC 27405 / DSM 1237 / JCM 9322 / NBRC 103400 / NCIMB 10682 / NRRL B-4536 / VPI 7372) (Clostridium thermocellum).